The chain runs to 250 residues: Phosphoribosylaminoimidazole-succinocarboxamide synthase (250 aa).

It belongs to the SAICAR synthetase family.

It catalyses the reaction 5-amino-1-(5-phospho-D-ribosyl)imidazole-4-carboxylate + L-aspartate + ATP = (2S)-2-[5-amino-1-(5-phospho-beta-D-ribosyl)imidazole-4-carboxamido]succinate + ADP + phosphate + 2 H(+). It functions in the pathway purine metabolism; IMP biosynthesis via de novo pathway; 5-amino-1-(5-phospho-D-ribosyl)imidazole-4-carboxamide from 5-amino-1-(5-phospho-D-ribosyl)imidazole-4-carboxylate: step 1/2. The sequence is that of Phosphoribosylaminoimidazole-succinocarboxamide synthase from Synechococcus sp. (strain CC9605).